A 379-amino-acid chain; its full sequence is Flagellar P-ring protein (379 aa).

The first 32 residues, 1 to 32 (MTAPAGFLPRVGRLIAVALTAVFLLAPTGAEA), serve as a signal peptide directing secretion.

Belongs to the FlgI family. As to quaternary structure, the basal body constitutes a major portion of the flagellar organelle and consists of four rings (L,P,S, and M) mounted on a central rod.

Its subcellular location is the periplasm. The protein resides in the bacterial flagellum basal body. Functionally, assembles around the rod to form the L-ring and probably protects the motor/basal body from shearing forces during rotation. The polypeptide is Flagellar P-ring protein (Rhodospirillum rubrum (strain ATCC 11170 / ATH 1.1.1 / DSM 467 / LMG 4362 / NCIMB 8255 / S1)).